Here is a 216-residue protein sequence, read N- to C-terminus: MOB kinase activator-like 1 homolog B (216 aa).

Cys79, Cys84, His161, and His166 together coordinate Zn(2+).

It belongs to the MOB1/phocein family.

The protein is MOB kinase activator-like 1 homolog B (mobB) of Dictyostelium discoideum (Social amoeba).